Here is a 430-residue protein sequence, read N- to C-terminus: Adenylosuccinate synthetase (430 aa).

GTP-binding positions include 12-18 and 40-42; these read GDEGKGK and GHT. Residue D13 is the Proton acceptor of the active site. The Mg(2+) site is built by D13 and G40. Residues 13 to 16, 38 to 41, T130, R144, Q224, T239, and R303 contribute to the IMP site; these read DEGK and NAGH. H41 acts as the Proton donor in catalysis. 299–305 contributes to the substrate binding site; sequence TVTGRKR. GTP contacts are provided by residues R305, 331–333, and 413–415; these read KLD and STS.

This sequence belongs to the adenylosuccinate synthetase family. Homodimer. Requires Mg(2+) as cofactor.

Its subcellular location is the cytoplasm. The catalysed reaction is IMP + L-aspartate + GTP = N(6)-(1,2-dicarboxyethyl)-AMP + GDP + phosphate + 2 H(+). It functions in the pathway purine metabolism; AMP biosynthesis via de novo pathway; AMP from IMP: step 1/2. In terms of biological role, plays an important role in the de novo pathway of purine nucleotide biosynthesis. Catalyzes the first committed step in the biosynthesis of AMP from IMP. This chain is Adenylosuccinate synthetase, found in Paracoccus denitrificans (strain Pd 1222).